Reading from the N-terminus, the 1375-residue chain is Ubiquitin carboxyl-terminal hydrolase 47 (1375 aa).

Lys122 bears the N6-acetyllysine mark. The USP domain occupies 188 to 564 (VGLVNQAMTC…NAYMLIYRLK (377 aa)). Cys197 serves as the catalytic Nucleophile. A disordered region spans residues 425–452 (DEKSPQTESCTDSGAENEGSCHSDQMSN). Residues 430-452 (QTESCTDSGAENEGSCHSDQMSN) show a composition bias toward polar residues. Catalysis depends on His503, which acts as the Proton acceptor. Position 832 is a phosphoserine (Ser832). 3 disordered regions span residues 840-859 (TAYQ…CERV), 880-968 (LKSL…SHSS), and 983-1024 (NGLD…ESGK). The span at 882 to 899 (SLSLQQQQDGDNGDSSKS) shows a compositional bias: low complexity. Phosphoserine is present on Ser910. A compositionally biased stretch (basic and acidic residues) spans 912–928 (LNERDSSASVDNRELEQ). Over residues 929 to 938 (HIQTSDPENF) the composition is skewed to polar residues. Ser933 is subject to Phosphoserine. Over residues 940 to 950 (SEERSDSDVNN) the composition is skewed to basic and acidic residues. Residues 953-968 (STSSVDSDILSSSHSS) are compositionally biased toward low complexity. The span at 997-1006 (KANEGKKETW) shows a compositional bias: basic and acidic residues. Positions 1007–1020 (DTAEEDSGTDSEYD) are enriched in acidic residues. Phosphoserine is present on Ser1013. Thr1015 is subject to Phosphothreonine. The residue at position 1017 (Ser1017) is a Phosphoserine.

Belongs to the peptidase C19 family. In terms of assembly, interacts with BTRC and FBXW11. Interacts with POLB. Expressed in skeletal muscle, heart and testis.

Its subcellular location is the cytoplasm. The enzyme catalyses Thiol-dependent hydrolysis of ester, thioester, amide, peptide and isopeptide bonds formed by the C-terminal Gly of ubiquitin (a 76-residue protein attached to proteins as an intracellular targeting signal).. Its function is as follows. Ubiquitin-specific protease that specifically deubiquitinates monoubiquitinated DNA polymerase beta (POLB), stabilizing POLB thereby playing a role in base-excision repair (BER). Acts as a regulator of cell growth and genome integrity. May also indirectly regulate CDC25A expression at a transcriptional level. The chain is Ubiquitin carboxyl-terminal hydrolase 47 (USP47) from Homo sapiens (Human).